The sequence spans 303 residues: Golgi to ER traffic protein 2 (303 aa).

At 1–168 (MSEQPLSQDE…NAYNIYQQRL (168 aa)) the chain is on the cytoplasmic side. Positions 19-86 (RQAKMARGKA…DPEDDPDLMD (68 aa)) are disordered. Polar residues predominate over residues 31–48 (RLNNILSQGSSVKGTTDP). Residues 169–189 (WKFRFSIIRFAAVLTNFFYHY) form a helical membrane-spanning segment. Residues 190 to 216 (LTIQDYSFTSSPHFYVRALAPHPAVNS) are Lumenal-facing. A helical membrane pass occupies residues 217 to 236 (FITWFSTCEVAILASFYLIT). Topologically, residues 237 to 280 (SKNNIYANASDGNLLLKGISMGAMVLPQLRAYQPLVIRLAHYWE) are cytoplasmic. The chain crosses the membrane as a helical span at residues 281–301 (VFSMLLGDIFLVVVLFGLVSI). Over 302 to 303 (YN) the chain is Lumenal.

The protein belongs to the GET2 family. In terms of assembly, component of the Golgi to ER traffic (GET) complex, which is composed of GET1, GET2 and GET3. Within the complex, GET1 and GET2 form a heterotetramer which is stabilized by phosphatidylinositol binding and which binds to the GET3 homodimer.

It localises to the endoplasmic reticulum membrane. The protein localises to the golgi apparatus membrane. In terms of biological role, required for the post-translational delivery of tail-anchored (TA) proteins to the endoplasmic reticulum. Together with GET1, acts as a membrane receptor for soluble GET3, which recognizes and selectively binds the transmembrane domain of TA proteins in the cytosol. The GET complex cooperates with the HDEL receptor ERD2 to mediate the ATP-dependent retrieval of resident ER proteins that contain a C-terminal H-D-E-L retention signal from the Golgi to the ER. This chain is Golgi to ER traffic protein 2, found in Debaryomyces hansenii (strain ATCC 36239 / CBS 767 / BCRC 21394 / JCM 1990 / NBRC 0083 / IGC 2968) (Yeast).